The sequence spans 384 residues: Alcohol dehydrogenase class-3 (384 aa).

Zn(2+) contacts are provided by Cys-48, His-70, Cys-100, Cys-103, Cys-106, Cys-114, and Cys-177.

The protein belongs to the zinc-containing alcohol dehydrogenase family. Class-III subfamily. As to quaternary structure, homodimer. Zn(2+) serves as cofactor.

The protein resides in the cytoplasm. It carries out the reaction a primary alcohol + NAD(+) = an aldehyde + NADH + H(+). It catalyses the reaction a secondary alcohol + NAD(+) = a ketone + NADH + H(+). The catalysed reaction is S-(hydroxymethyl)glutathione + NADP(+) = S-formylglutathione + NADPH + H(+). The enzyme catalyses S-(hydroxymethyl)glutathione + NAD(+) = S-formylglutathione + NADH + H(+). Functionally, class-III ADH is remarkably ineffective in oxidizing ethanol, but it readily catalyzes the oxidation of long-chain primary alcohols and the oxidation of S-(hydroxymethyl) glutathione. Plays a role in the calcium flux to the cytoplasm in the ASJ sensory neurons upon removal of a nitric oxide stimulus. In Caenorhabditis elegans, this protein is Alcohol dehydrogenase class-3.